The sequence spans 190 residues: Ribosome hibernation promotion factor (190 aa).

The protein belongs to the HPF/YfiA ribosome-associated protein family. Long HPF subfamily. Interacts with 100S ribosomes.

It is found in the cytoplasm. In terms of biological role, required for dimerization of active 70S ribosomes into 100S ribosomes in stationary phase; 100S ribosomes are translationally inactive and sometimes present during exponential growth. The protein is Ribosome hibernation promotion factor of Staphylococcus aureus (strain COL).